Here is a 235-residue protein sequence, read N- to C-terminus: MFQFKQFSVKQDKTAMKVGTDGVLLGSWAPVFHNPFSILDIGAGTGIIALMLAQRTHAEQIDALEIDEDAYEQAVENFEASPWGDRLFCFHAGLDEFIEEPEDEYDLIVSNPPFYAEDYKTNDEQRDLARFQDAMPFEEIVEAADLLLSENGILAVIIPFKEEAKFTALAKDFELYPIKITRVKGTPKSEIKRSLLAFSRNEVSEIEIDELVIEIDRHIYTPEYIDLTKEFYLKM.

It belongs to the methyltransferase superfamily. tRNA (adenine-N(6)-)-methyltransferase family.

The protein resides in the cytoplasm. It carries out the reaction adenosine(37) in tRNA1(Val) + S-adenosyl-L-methionine = N(6)-methyladenosine(37) in tRNA1(Val) + S-adenosyl-L-homocysteine + H(+). Functionally, specifically methylates the adenine in position 37 of tRNA(1)(Val) (anticodon cmo5UAC). In Flavobacterium johnsoniae (strain ATCC 17061 / DSM 2064 / JCM 8514 / BCRC 14874 / CCUG 350202 / NBRC 14942 / NCIMB 11054 / UW101) (Cytophaga johnsonae), this protein is tRNA1(Val) (adenine(37)-N6)-methyltransferase.